The following is a 120-amino-acid chain: UPF0382 membrane protein SSP2132 (120 aa).

4 helical membrane-spanning segments follow: residues 3-23 (VFII…AFGA), 46-66 (MYHG…SINV), 69-89 (VGWL…ILAL), and 94-114 (IIGA…LMLV).

It belongs to the UPF0382 family.

It is found in the cell membrane. The sequence is that of UPF0382 membrane protein SSP2132 from Staphylococcus saprophyticus subsp. saprophyticus (strain ATCC 15305 / DSM 20229 / NCIMB 8711 / NCTC 7292 / S-41).